The sequence spans 204 residues: Probable nicotinate-nucleotide adenylyltransferase (204 aa).

This sequence belongs to the NadD family.

It catalyses the reaction nicotinate beta-D-ribonucleotide + ATP + H(+) = deamido-NAD(+) + diphosphate. It functions in the pathway cofactor biosynthesis; NAD(+) biosynthesis; deamido-NAD(+) from nicotinate D-ribonucleotide: step 1/1. Functionally, catalyzes the reversible adenylation of nicotinate mononucleotide (NaMN) to nicotinic acid adenine dinucleotide (NaAD). The protein is Probable nicotinate-nucleotide adenylyltransferase of Methylacidiphilum infernorum (isolate V4) (Methylokorus infernorum (strain V4)).